Reading from the N-terminus, the 155-residue chain is SsrA-binding protein (155 aa).

It belongs to the SmpB family.

The protein localises to the cytoplasm. In terms of biological role, required for rescue of stalled ribosomes mediated by trans-translation. Binds to transfer-messenger RNA (tmRNA), required for stable association of tmRNA with ribosomes. tmRNA and SmpB together mimic tRNA shape, replacing the anticodon stem-loop with SmpB. tmRNA is encoded by the ssrA gene; the 2 termini fold to resemble tRNA(Ala) and it encodes a 'tag peptide', a short internal open reading frame. During trans-translation Ala-aminoacylated tmRNA acts like a tRNA, entering the A-site of stalled ribosomes, displacing the stalled mRNA. The ribosome then switches to translate the ORF on the tmRNA; the nascent peptide is terminated with the 'tag peptide' encoded by the tmRNA and targeted for degradation. The ribosome is freed to recommence translation, which seems to be the essential function of trans-translation. The polypeptide is SsrA-binding protein (Lactococcus lactis subsp. lactis (strain IL1403) (Streptococcus lactis)).